Consider the following 335-residue polypeptide: Anthranilate phosphoribosyltransferase (335 aa).

Residues G79, 82–83 (GD), T87, 89–92 (NVST), 107–115 (KHGSRSVSS), and S119 contribute to the 5-phospho-alpha-D-ribose 1-diphosphate site. G79 provides a ligand contact to anthranilate. S91 serves as a coordination point for Mg(2+). R165 provides a ligand contact to anthranilate. 2 residues coordinate Mg(2+): D223 and E224.

This sequence belongs to the anthranilate phosphoribosyltransferase family. Homodimer. Mg(2+) serves as cofactor.

It carries out the reaction N-(5-phospho-beta-D-ribosyl)anthranilate + diphosphate = 5-phospho-alpha-D-ribose 1-diphosphate + anthranilate. Its pathway is amino-acid biosynthesis; L-tryptophan biosynthesis; L-tryptophan from chorismate: step 2/5. Catalyzes the transfer of the phosphoribosyl group of 5-phosphorylribose-1-pyrophosphate (PRPP) to anthranilate to yield N-(5'-phosphoribosyl)-anthranilate (PRA). The protein is Anthranilate phosphoribosyltransferase of Helicobacter pylori (strain HPAG1).